Consider the following 392-residue polypeptide: Na(+)/H(+) antiporter NhaA (392 aa).

11 helical membrane-spanning segments follow: residues 14-34, 59-79, 95-115, 125-145, 154-174, 179-199, 213-233, 254-274, 287-307, 328-348, and 363-383; these read AGGLILIFAAVVALFMANSPL, LLLWINDGLMAIFFLVVGLEV, IFPAIAALGGMLAPALIYLLF, GWAIPAATDIAFALGVMALLG, VFLLALAIIDDLGVIIIIALF, VSLQALGMAAAAIALLGYMNW, LVLWVCILKSGVHATLAGVIV, GLHPWVAYLILPLFAFANAGV, LLPLGIASGLFIGKPLGIFLF, IFAVSVLCGIGFTMSIFIASL, and LGILLGSTTAAVVGYSLLRLA.

This sequence belongs to the NhaA Na(+)/H(+) (TC 2.A.33) antiporter family.

The protein localises to the cell inner membrane. It catalyses the reaction Na(+)(in) + 2 H(+)(out) = Na(+)(out) + 2 H(+)(in). In terms of biological role, na(+)/H(+) antiporter that extrudes sodium in exchange for external protons. This is Na(+)/H(+) antiporter NhaA from Yersinia enterocolitica serotype O:8 / biotype 1B (strain NCTC 13174 / 8081).